Here is a 181-residue protein sequence, read N- to C-terminus: Der GTPase-activating protein YihI (181 aa).

Disordered stretches follow at residues 1 to 75 (MSRK…KKIP) and 145 to 181 (EPEA…DYKG). Positions 32–43 (RLRKKDKKRKGL) are enriched in basic residues. Residues 146 to 155 (PEAEEEFEDE) are compositionally biased toward acidic residues. A compositionally biased stretch (basic and acidic residues) spans 156-165 (APVRKSRSDD). Residues 166–181 (DLLADFEDFDMDDYKG) are compositionally biased toward acidic residues.

The protein belongs to the YihI family. In terms of assembly, interacts with Der.

In terms of biological role, a GTPase-activating protein (GAP) that modifies Der/EngA GTPase function. May play a role in ribosome biogenesis. This chain is Der GTPase-activating protein YihI, found in Vibrio vulnificus (strain YJ016).